Reading from the N-terminus, the 227-residue chain is PKHD-type hydroxylase Bcen_3557 (227 aa).

The Fe2OG dioxygenase domain occupies 78 to 178 (KVFPPLFNRY…RVASFFWIQS (101 aa)). 3 residues coordinate Fe cation: His96, Asp98, and His159. Position 169 (Arg169) interacts with 2-oxoglutarate.

The cofactor is Fe(2+). L-ascorbate is required as a cofactor.

The chain is PKHD-type hydroxylase Bcen_3557 from Burkholderia orbicola (strain AU 1054).